The following is a 331-amino-acid chain: UDP-N-acetylenolpyruvoylglucosamine reductase (331 aa).

One can recognise an FAD-binding PCMH-type domain in the interval 54-221 (RVGGAAELYV…TQATFQLQPG (168 aa)). Arg200 is a catalytic residue. The Proton donor role is filled by Ser251. Glu321 is an active-site residue.

The protein belongs to the MurB family. It depends on FAD as a cofactor.

The protein resides in the cytoplasm. It catalyses the reaction UDP-N-acetyl-alpha-D-muramate + NADP(+) = UDP-N-acetyl-3-O-(1-carboxyvinyl)-alpha-D-glucosamine + NADPH + H(+). Its pathway is cell wall biogenesis; peptidoglycan biosynthesis. Cell wall formation. In Trichormus variabilis (strain ATCC 29413 / PCC 7937) (Anabaena variabilis), this protein is UDP-N-acetylenolpyruvoylglucosamine reductase.